The sequence spans 752 residues: DNA ligase (752 aa).

The tract at residues 1–25 is disordered; sequence MKRNGFVPSNSVGRRGIPSNSTSSA. NAD(+) is bound by residues 91 to 95, 140 to 141, and E170; these read DADFD and SL. K172 functions as the N6-AMP-lysine intermediate in the catalytic mechanism. NAD(+) is bound by residues R193, E233, K350, and K374. The Zn(2+) site is built by C474, C477, C493, and C499. The BRCT domain maps to 669 to 752; the sequence is STPRTLAGLT…TLLDGGPAAL (84 aa).

The protein belongs to the NAD-dependent DNA ligase family. LigA subfamily. Mg(2+) serves as cofactor. It depends on Mn(2+) as a cofactor.

The catalysed reaction is NAD(+) + (deoxyribonucleotide)n-3'-hydroxyl + 5'-phospho-(deoxyribonucleotide)m = (deoxyribonucleotide)n+m + AMP + beta-nicotinamide D-nucleotide.. Its function is as follows. DNA ligase that catalyzes the formation of phosphodiester linkages between 5'-phosphoryl and 3'-hydroxyl groups in double-stranded DNA using NAD as a coenzyme and as the energy source for the reaction. It is essential for DNA replication and repair of damaged DNA. In Nocardioides sp. (strain ATCC BAA-499 / JS614), this protein is DNA ligase.